A 175-amino-acid polypeptide reads, in one-letter code: NADH-quinone oxidoreductase subunit I 2 (175 aa).

4Fe-4S ferredoxin-type domains are found at residues 50-82 (HVLQ…IEAA) and 98-127 (KVYN…HGHG). 8 residues coordinate [4Fe-4S] cluster: Cys62, Cys65, Cys68, Cys72, Cys107, Cys110, Cys113, and Cys117.

Belongs to the complex I 23 kDa subunit family. As to quaternary structure, NDH-1 is composed of 14 different subunits. Subunits NuoA, H, J, K, L, M, N constitute the membrane sector of the complex. [4Fe-4S] cluster is required as a cofactor.

The protein localises to the cell inner membrane. It catalyses the reaction a quinone + NADH + 5 H(+)(in) = a quinol + NAD(+) + 4 H(+)(out). Its function is as follows. NDH-1 shuttles electrons from NADH, via FMN and iron-sulfur (Fe-S) centers, to quinones in the respiratory chain. The immediate electron acceptor for the enzyme in this species is believed to be ubiquinone. Couples the redox reaction to proton translocation (for every two electrons transferred, four hydrogen ions are translocated across the cytoplasmic membrane), and thus conserves the redox energy in a proton gradient. This chain is NADH-quinone oxidoreductase subunit I 2, found in Koribacter versatilis (strain Ellin345).